Consider the following 389-residue polypeptide: Alkanesulfonate monooxygenase (389 aa).

It belongs to the SsuD family.

It catalyses the reaction an alkanesulfonate + FMNH2 + O2 = an aldehyde + FMN + sulfite + H2O + 2 H(+). Its function is as follows. Catalyzes the desulfonation of aliphatic sulfonates. This is Alkanesulfonate monooxygenase from Rhizobium etli (strain CIAT 652).